Here is a 1195-residue protein sequence, read N- to C-terminus: Phosphatidylinositol-3,5-bisphosphate 3-phosphatase MTMR4 (1195 aa).

Position 8 is a phosphoserine (S8). A Myotubularin phosphatase domain is found at 153–570 (EHIRCRQEAE…RALHLWTAVY (418 aa)). Residues N320, N345, and I346 each coordinate a 1,2-diacyl-sn-glycero-3-phospho-(1D-myo-inositol-3,5-bisphosphate). The a 1,2-diacyl-sn-glycero-3-phospho-(1D-myo-inositol-3-phosphate) site is built by N320, N345, and I346. Catalysis depends on C407, which acts as the Phosphocysteine intermediate. S408, D409, G410, W411, D412, R413, K449, and R453 together coordinate a 1,2-diacyl-sn-glycero-3-phospho-(1D-myo-inositol-3,5-bisphosphate). A 1,2-diacyl-sn-glycero-3-phospho-(1D-myo-inositol-3-phosphate)-binding residues include S408, D409, G410, W411, D412, and R413. R453 lines the a 1,2-diacyl-sn-glycero-3-phospho-(1D-myo-inositol-3-phosphate) pocket. Phosphoserine occurs at positions 610 and 629. 3 disordered regions span residues 645–756 (EPWH…EHCP), 780–800 (ESSQ…SMLG), and 827–877 (DPST…LLEN). The span at 720 to 729 (PEIKVLEETK) shows a compositional bias: basic and acidic residues. Polar residues-rich tracts occupy residues 780-795 (ESSQ…QAQP) and 831-854 (DFLN…SSVP). The PY-motif; substrate motif for NEDD4 motif lies at 1004-1008 (VPPLY). Residues 1023–1055 (HRLRQIEAGYKQEVEQLRRQVRELQMRLDIRHC) adopt a coiled-coil conformation. An FYVE-type zinc finger spans residues 1114 to 1174 (DHMASHCYNC…VCNSCYEHIQ (61 aa)). Zn(2+) contacts are provided by C1120, C1123, C1136, C1139, C1144, C1147, C1166, and C1169.

This sequence belongs to the protein-tyrosine phosphatase family. Non-receptor class myotubularin subfamily. In terms of assembly, homooligomeric. Forms MTMR3:MTMR4 heterooligomers; regulates the localization of both proteins. The MTMR3:MTMR4 heterooligomer can also recruit both CEP55 and PLK1; occurs during early mitosis, regulates the phosphorylation of CEP55 by PLK1 and its recruitment to the midbody where it can mediate cell abscission. Interacts with SMAD2 and SMAD3; negatively regulates TGF-beta signaling through SMAD2 and SMAD3 dephosphorylation and retention in endosomes. Interacts with SMAD1; negatively regulates BMP signaling through SMAD1 dephosphorylation and retention in endosomes. In terms of processing, ubiquitinated. Ubiquitination by NEDD4 probably leads to proteasomal degradation. Phosphorylated by CDK1 during mitosis. As to expression, expressed in brain, heart, kidney, spleen, liver, colon, testis, muscle, placenta, thyroid gland, pancreas, ovary, prostate, skin, peripheral blood, and bone marrow.

The protein localises to the early endosome membrane. It is found in the recycling endosome membrane. It localises to the late endosome membrane. Its subcellular location is the cytoplasmic vesicle. The protein resides in the phagosome membrane. The enzyme catalyses a 1,2-diacyl-sn-glycero-3-phospho-(1D-myo-inositol-3-phosphate) + H2O = a 1,2-diacyl-sn-glycero-3-phospho-(1D-myo-inositol) + phosphate. The catalysed reaction is a 1,2-diacyl-sn-glycero-3-phospho-(1D-myo-inositol-3,5-bisphosphate) + H2O = a 1,2-diacyl-sn-glycero-3-phospho-(1D-myo-inositol-5-phosphate) + phosphate. It carries out the reaction 1,2-dioctanoyl-sn-glycero-3-phospho-(1-D-myo-inositol-3-phosphate) + H2O = 1,2-dioctanoyl-sn-glycero-3-phospho-(1D-myo-inositol) + phosphate. It catalyses the reaction 1,2-dioctanoyl-sn-glycero-3-phospho-(1D-myo-inositol-3,5-bisphosphate) + H2O = 1,2-dioctanoyl-sn-glycero-3-phospho-(1D-myo-inositol-5-phosphate) + phosphate. Its activity is regulated as follows. The phosphatidylinositol-3-phosphate phosphatase activity is inhibited by vanadate. In terms of biological role, lipid phosphatase that specifically dephosphorylates the D-3 position of phosphatidylinositol 3-phosphate and phosphatidylinositol 3,5-bisphosphate, generating phosphatidylinositol and phosphatidylinositol 5-phosphate. Decreases the levels of phosphatidylinositol 3-phosphate, a phospholipid found in cell membranes where it acts as key regulator of both cell signaling and intracellular membrane traffic, in a subset of endosomal membranes to negatively regulate both endocytic recycling and trafficking and/or maturation of endosomes toward lysosomes. Through phosphatidylinositol 3-phosphate turnover in phagosome membranes regulates phagocytosis and phagosome maturation. By decreasing phosphatidylinositol 3-monophosphate (PI3P) levels in immune cells it can also regulate the innate immune response. Beside its lipid phosphatase activity, can also function as a molecular adapter to regulate midbody abscission during mitotic cytokinesis. Can also negatively regulate TGF-beta and BMP signaling through Smad proteins dephosphorylation and retention in endosomes. This Homo sapiens (Human) protein is Phosphatidylinositol-3,5-bisphosphate 3-phosphatase MTMR4.